The primary structure comprises 621 residues: Zinc metalloproteinase-disintegrin-like NaMP (621 aa).

A signal peptide spans 1 to 20; the sequence is MIQPLLVAICLVVFPYQGSS. The propeptide occupies 21-188; it reads TILESGKVRD…GESDETIKKI (168 aa). The Peptidase M12B domain maps to 206 to 402; that stretch reads KHIELYMVAD…KSAQCILNDP (197 aa). N-linked (GlcNAc...) asparagine glycans are attached at residues Asn-225, Asn-268, and Asn-319. 17 disulfides stabilise this stretch: Cys-317–Cys-397, Cys-357–Cys-381, Cys-359–Cys-364, Cys-413–Cys-442, Cys-424–Cys-437, Cys-426–Cys-432, Cys-436–Cys-459, Cys-450–Cys-456, Cys-455–Cys-481, Cys-468–Cys-488, Cys-475–Cys-507, Cys-500–Cys-512, Cys-519–Cys-569, Cys-534–Cys-579, Cys-547–Cys-557, Cys-564–Cys-605, and Cys-599–Cys-610. His-342 is a binding site for Zn(2+). Glu-343 is a catalytic residue. Zn(2+) is bound by residues His-346 and His-352. Residues 410 to 496 enclose the Disintegrin domain; it reads TAICGNGFVE…ECPMNHFHMN (87 aa). Residues 474-476 carry the D/ECD-tripeptide motif; it reads DCD. Asn-551 is a glycosylation site (N-linked (GlcNAc...) asparagine).

This sequence belongs to the venom metalloproteinase (M12B) family. P-III subfamily. P-IIIa sub-subfamily. As to quaternary structure, monomer. The cofactor is Zn(2+). Expressed by the venom gland.

Its subcellular location is the secreted. Its function is as follows. Snake venom zinc metalloproteinase that inhibits platelet aggregation and degrades fibrinogen. In Naja atra (Chinese cobra), this protein is Zinc metalloproteinase-disintegrin-like NaMP.